The sequence spans 419 residues: MKTYLVGGALRDRLLGRPVSDHDWLVVGATPEEMAARGYLPVGRDFPVFLHPQTREEYALARTERKSAPGYRGFTVHASPDVTLEQDLARRDLTVNAIALPAEFVGTDGRFEPDAGKLADPFHGRRDLEHKLLRHVTDAFREDPVRILRVARFAARFDDFSVAPETMALMREMVQAGEADALVPERVWQELSRGLMETRPSRMFEVLRACGALAVLLPEVDRLWGVPQPEAHHPEVDCGVHLMMVIDTSAKLQASLPVRFACLMHDLGKGTTEPGLLPRHIGHEKRSAELLHAVCDRWRVPVEIRELAEVVAREHGNIHRSGELAAAALVRLLERCDAFRKPARFADVLLACECDARGRLGFEDRPYPQRERLLAVLATAAGVPTEAVARAAQQSGAAGPQIGEAIHRARVEAVAALPG.

Residues G8 and R11 each contribute to the ATP site. The CTP site is built by G8 and R11. Residues D21 and D23 each coordinate Mg(2+). ATP contacts are provided by R91, R149, and R152. 3 residues coordinate CTP: R91, R149, and R152. One can recognise an HD domain in the interval 238–339 (CGVHLMMVID…VRLLERCDAF (102 aa)).

Belongs to the tRNA nucleotidyltransferase/poly(A) polymerase family. Bacterial CCA-adding enzyme type 1 subfamily. As to quaternary structure, monomer. Can also form homodimers and oligomers. Requires Mg(2+) as cofactor. Ni(2+) is required as a cofactor.

It catalyses the reaction a tRNA precursor + 2 CTP + ATP = a tRNA with a 3' CCA end + 3 diphosphate. The catalysed reaction is a tRNA with a 3' CCA end + 2 CTP + ATP = a tRNA with a 3' CCACCA end + 3 diphosphate. Its function is as follows. Catalyzes the addition and repair of the essential 3'-terminal CCA sequence in tRNAs without using a nucleic acid template. Adds these three nucleotides in the order of C, C, and A to the tRNA nucleotide-73, using CTP and ATP as substrates and producing inorganic pyrophosphate. tRNA 3'-terminal CCA addition is required both for tRNA processing and repair. Also involved in tRNA surveillance by mediating tandem CCA addition to generate a CCACCA at the 3' terminus of unstable tRNAs. While stable tRNAs receive only 3'-terminal CCA, unstable tRNAs are marked with CCACCA and rapidly degraded. The polypeptide is Multifunctional CCA protein (Variovorax paradoxus (strain S110)).